The primary structure comprises 197 residues: dTTP/UTP pyrophosphatase (197 aa).

Asp70 functions as the Proton acceptor in the catalytic mechanism.

Belongs to the Maf family. YhdE subfamily. A divalent metal cation is required as a cofactor.

The protein localises to the cytoplasm. It catalyses the reaction dTTP + H2O = dTMP + diphosphate + H(+). The catalysed reaction is UTP + H2O = UMP + diphosphate + H(+). Its function is as follows. Nucleoside triphosphate pyrophosphatase that hydrolyzes dTTP and UTP. May have a dual role in cell division arrest and in preventing the incorporation of modified nucleotides into cellular nucleic acids. This is dTTP/UTP pyrophosphatase from Methanosarcina mazei (strain ATCC BAA-159 / DSM 3647 / Goe1 / Go1 / JCM 11833 / OCM 88) (Methanosarcina frisia).